We begin with the raw amino-acid sequence, 88 residues long: MVIDPELGIDIVNLGLVYKVNVDDEGVCTVDMTLTSMGCPMGPQIIDQVKTVLAEIPEIQDTEVNIVWSPPWTKDMMSRYAKIALGVS.

The protein belongs to the MIP18 family.

Functionally, involved in the maturation of iron-sulfur (Fe-S) proteins. May function as a Fe-S cluster carrier. Is required for S.aureus growth under conditions that impose a high demand for lipoic acid, likely via a role in the maturation of the lipoate synthase LipA. Is non-essential for growth in conditions that impose a low demand for lipoic acid or Fe-S clusters, such as fermentative growth. Also seems to be involved in the maturation of AcnA, LeuCD and IlvD proteins, that utilize Fe-S cluster cofactors, and its role increases under conditions of high-demand for Fe-S clusters (respiratory growth). Is not involved in the repair of Fe-S clusters damaged by reactive oxygen species or in the physical protection of Fe-S clusters from oxidants. Displays synergy with the Fe-S cluster carrier Nfu. The chain is Fe-S protein maturation auxiliary factor SufT from Staphylococcus aureus (strain USA300).